Consider the following 81-residue polypeptide: Xenopsin peptides (81 aa).

An N-terminal signal peptide occupies residues 1–20; sequence MYKGIFLCVLLAVICANSLA. The propeptide occupies 21–37; the sequence is TPSSDADEDNDEVERYV. Residues 65–73 constitute a propeptide, removed in mature form by a dipeptidylpeptidase; sequence EAMLRSAEA.

Belongs to the gastrin/cholecystokinin family. Magainin subfamily. XPF is synthesized in the stomach and stored in a novel granular multinucleated cell in the gastric mucosa, it is stored as active, processed peptides in large granules within the granular gland secretions of the skin.

The protein localises to the secreted. Its function is as follows. Xenopsin is a neurotensin-like octapeptide. In terms of biological role, XPF has antimicrobial activity. The chain is Xenopsin peptides from Xenopus laevis (African clawed frog).